A 703-amino-acid chain; its full sequence is NADH-quinone oxidoreductase chain 12 (703 aa).

16 helical membrane passes run 4–24 (FVLFAPLIASLIAGLGWRAIG), 30–50 (YLTTGVLFLSCLISWYLFLSF), 79–99 (LTAIMLIVVTTVSALVHMYSL), 116–136 (ARFFAYLSFFTFAMLMLVTAD), 138–158 (LLQMFFGWEGVGVASYLLIGF), 179–199 (GDFGFLLGIFGIYWLTGSVQF), 224–244 (ANLLGFLLFVGAMGKSAQLLL), 256–276 (TPVSALIHAATMVTAGVFLVC), 290–310 (NFIVIIGATTAFFAATVGLVQ), 325–345 (LGYMFVAAGVGVYSAAMFHLL), 346–366 (THAFFKAMLFLGAGSVIHAMH), 381–401 (IPLTFWAMMIGTFAITGVGIP), 415–435 (AIIESAYAGSGYAFWLLVIAA), 475–495 (LGVLAIGAVFAGMVWYGPFFG), 580–600 (VSPFVAMVLGLITAWTFYIAN), and 679–699 (LFHYAFAMVLGIVGLLIWVMM).

This sequence belongs to the complex I subunit 5 family. As to quaternary structure, NDH-1 is composed of at least 14 different subunits, Nqo1 to Nqo14. The complex has a L-shaped structure, with the hydrophobic arm (subunits Nqo7, Nqo8, Nqo10 to Nqo14) embedded in the inner membrane and the hydrophilic peripheral arm (subunits Nqo1 to Nqo6, Nqo9) protruding into the bacterial cytoplasm. The hydrophilic domain contains all the redox centers.

The protein resides in the cell inner membrane. It carries out the reaction a quinone + NADH + 5 H(+)(in) = a quinol + NAD(+) + 4 H(+)(out). In terms of biological role, NDH-1 shuttles electrons from NADH, via FMN and iron-sulfur (Fe-S) centers, to quinones in the respiratory chain. The immediate electron acceptor for the enzyme in this species is believed to be ubiquinone. Couples the redox reaction to proton translocation (for every two electrons transferred, four hydrogen ions are translocated across the cytoplasmic membrane), and thus conserves the redox energy in a proton gradient. In Paracoccus denitrificans, this protein is NADH-quinone oxidoreductase chain 12.